The following is a 212-amino-acid chain: N-acetyltransferase 9-like protein (212 aa).

The 168-residue stretch at 34–201 (EEIREQTASE…INLLNLKNND (168 aa)) folds into the N-acetyltransferase domain.

This sequence belongs to the acetyltransferase family. GNAT subfamily.

In Dictyostelium discoideum (Social amoeba), this protein is N-acetyltransferase 9-like protein (nat9).